The chain runs to 313 residues: tRNA dimethylallyltransferase (313 aa).

Residue 10–17 (GPTAVGKT) participates in ATP binding. 12–17 (TAVGKT) contacts substrate. Positions 35–38 (DSMQ) are interaction with substrate tRNA.

Belongs to the IPP transferase family. Monomer. Mg(2+) serves as cofactor.

The enzyme catalyses adenosine(37) in tRNA + dimethylallyl diphosphate = N(6)-dimethylallyladenosine(37) in tRNA + diphosphate. In terms of biological role, catalyzes the transfer of a dimethylallyl group onto the adenine at position 37 in tRNAs that read codons beginning with uridine, leading to the formation of N6-(dimethylallyl)adenosine (i(6)A). The protein is tRNA dimethylallyltransferase of Alkaliphilus oremlandii (strain OhILAs) (Clostridium oremlandii (strain OhILAs)).